A 471-amino-acid polypeptide reads, in one-letter code: tRNA-2-methylthio-N(6)-dimethylallyladenosine synthase (471 aa).

The MTTase N-terminal domain maps to 31-149; sequence LYYHIETYGC…FPQLLWEALN (119 aa). Positions 40, 76, 110, 186, 190, and 193 each coordinate [4Fe-4S] cluster. The region spanning 172 to 402 is the Radical SAM core domain; the sequence is RDSNLKAWVN…IELQNKISLE (231 aa). The 64-residue stretch at 405-468 folds into the TRAM domain; sequence AELRGKIVEV…AWTMQGELVE (64 aa).

The protein belongs to the methylthiotransferase family. MiaB subfamily. In terms of assembly, monomer. [4Fe-4S] cluster serves as cofactor.

It is found in the cytoplasm. The catalysed reaction is N(6)-dimethylallyladenosine(37) in tRNA + (sulfur carrier)-SH + AH2 + 2 S-adenosyl-L-methionine = 2-methylsulfanyl-N(6)-dimethylallyladenosine(37) in tRNA + (sulfur carrier)-H + 5'-deoxyadenosine + L-methionine + A + S-adenosyl-L-homocysteine + 2 H(+). Functionally, catalyzes the methylthiolation of N6-(dimethylallyl)adenosine (i(6)A), leading to the formation of 2-methylthio-N6-(dimethylallyl)adenosine (ms(2)i(6)A) at position 37 in tRNAs that read codons beginning with uridine. This is tRNA-2-methylthio-N(6)-dimethylallyladenosine synthase from Thermoanaerobacter pseudethanolicus (strain ATCC 33223 / 39E) (Clostridium thermohydrosulfuricum).